The primary structure comprises 172 residues: Small ribosomal subunit protein bS16 (172 aa).

The segment at 125 to 172 is disordered; the sequence is KKRKAKEEAEAKAAAEKAAEEAAAAEAAKAEEEAAKAEEADSAEESAE. Basic and acidic residues-rich tracts occupy residues 129-144 and 152-163; these read AKEEAEAKAAAEKAAE and AKAEEEAAKAEE.

The protein belongs to the bacterial ribosomal protein bS16 family.

The sequence is that of Small ribosomal subunit protein bS16 from Corynebacterium aurimucosum (strain ATCC 700975 / DSM 44827 / CIP 107346 / CN-1) (Corynebacterium nigricans).